Reading from the N-terminus, the 439-residue chain is Beta-1,3-galactosyl-O-glycosyl-glycoprotein beta-1,6-N-acetylglucosaminyltransferase (439 aa).

Residues 1–11 (MVGWKKKKLCR) are Cytoplasmic-facing. Residues 12-29 (GHHLWVLGCYMLLAVVSL) traverse the membrane as a helical; Signal-anchor for type II membrane protein segment. The Lumenal portion of the chain corresponds to 30–439 (RLSLRFKCDV…RHKAIYGTEL (410 aa)). N-linked (GlcNAc...) asparagine; by host glycans are attached at residues asparagine 71 and asparagine 107. 4 disulfide bridges follow: cysteine 72/cysteine 229, cysteine 163/cysteine 383, cysteine 184/cysteine 211, and cysteine 392/cysteine 424.

It belongs to the glycosyltransferase 14 family.

Its subcellular location is the host Golgi apparatus membrane. The catalysed reaction is a 3-O-[beta-D-galactosyl-(1-&gt;3)-N-acetyl-alpha-D-galactosaminyl]-L-seryl-[protein] + UDP-N-acetyl-alpha-D-glucosamine = 3-O-{beta-D-galactosyl-(1-&gt;3)-[N-acetyl-beta-D-glucosaminyl-(1-&gt;6)]-N-acetyl-alpha-D-galactosaminyl}-L-seryl-[protein] + UDP + H(+). It carries out the reaction a 3-O-[beta-D-galactosyl-(1-&gt;3)-N-acetyl-alpha-D-galactosaminyl]-L-threonyl-[protein] + UDP-N-acetyl-alpha-D-glucosamine = a 3-O-{beta-D-galactosyl-(1-&gt;3)-[N-acetyl-beta-D-glucosaminyl-(1-&gt;6)]-N-acetyl-alpha-D-galactosaminyl}-L-threonyl-[protein] + UDP + H(+). The enzyme catalyses a beta-D-Gal-(1-&gt;4)-beta-D-GlcNAc-(1-&gt;3)-beta-D-Gal-(1-&gt;4)-beta-D-GlcNAc derivative + UDP-N-acetyl-alpha-D-glucosamine = a beta-D-Gal-(1-&gt;4)-beta-D-GlcNAc-(1-&gt;3)-[beta-D-GlcNAc-(1-&gt;6)]-beta-D-Gal-(1-&gt;4)-N-acetyl-beta-D-glucosaminyl derivative + UDP + H(+). It catalyses the reaction 3-O-[N-acetyl-beta-D-glucosaminyl-(1-&gt;3)-N-acetyl-alpha-D-galactosaminyl]-L-seryl-[protein] + UDP-N-acetyl-alpha-D-glucosamine = 3-O-[N-acetyl-beta-D-glucosaminyl-(1-&gt;3)-[N-acetyl-beta-D-glucosaminyl-(1-&gt;6)]-N-acetyl-alpha-D-galactosaminyl]-L-seryl-[protein] + UDP + H(+). The catalysed reaction is a 3-O-[N-acetyl-beta-D-glucosaminyl-(1-&gt;3)-N-acetyl-alpha-D-galactosaminyl]-L-threonyl-[protein] + UDP-N-acetyl-alpha-D-glucosamine = 3-O-[N-acetyl-beta-D-glucosaminyl-(1-&gt;3)-[N-acetyl-beta-D-glucosaminyl-(1-&gt;6)]-N-acetyl-alpha-D-galactosaminyl]-L-threonyl-[protein] + UDP + H(+). It participates in protein modification; protein glycosylation. Non-essential glycosyltransferase that can synthesize all known mucin beta 6 N-acetylglucosaminides. Mediates core 2 and core 4 O-glycan branching, 2 important steps in mucin-type biosynthesis. Has also I-branching enzyme activity by converting linear into branched poly-N-acetyllactosaminoglycans. Contributes to the post-translational modifications of structural proteins. This chain is Beta-1,3-galactosyl-O-glycosyl-glycoprotein beta-1,6-N-acetylglucosaminyltransferase (Bo17), found in Bovine herpesvirus 4 (BoHV-4).